Consider the following 342-residue polypeptide: Ribosomal RNA small subunit methyltransferase C (342 aa).

The protein belongs to the methyltransferase superfamily. RsmC family. As to quaternary structure, monomer.

Its subcellular location is the cytoplasm. It carries out the reaction guanosine(1207) in 16S rRNA + S-adenosyl-L-methionine = N(2)-methylguanosine(1207) in 16S rRNA + S-adenosyl-L-homocysteine + H(+). Functionally, specifically methylates the guanine in position 1207 of 16S rRNA in the 30S particle. This is Ribosomal RNA small subunit methyltransferase C from Hahella chejuensis (strain KCTC 2396).